Reading from the N-terminus, the 43-residue chain is Protein PsbN (43 aa).

Residues 4 to 24 (ATFVAIFISCLLISFTGYALY) traverse the membrane as a helical segment.

Belongs to the PsbN family.

Its subcellular location is the plastid. It is found in the chloroplast thylakoid membrane. In terms of biological role, may play a role in photosystem I and II biogenesis. This Marchantia polymorpha (Common liverwort) protein is Protein PsbN.